Here is a 235-residue protein sequence, read N- to C-terminus: Large ribosomal subunit protein uL1 (235 aa).

It belongs to the universal ribosomal protein uL1 family. Part of the 50S ribosomal subunit.

Its function is as follows. Binds directly to 23S rRNA. The L1 stalk is quite mobile in the ribosome, and is involved in E site tRNA release. In terms of biological role, protein L1 is also a translational repressor protein, it controls the translation of the L11 operon by binding to its mRNA. This Mycolicibacterium paratuberculosis (strain ATCC BAA-968 / K-10) (Mycobacterium paratuberculosis) protein is Large ribosomal subunit protein uL1.